The primary structure comprises 132 residues: UPF0719 inner membrane protein YjfL (132 aa).

Topologically, residues 1 to 6 are periplasmic; sequence MHILDS. Residues 7–27 traverse the membrane as a helical segment; that stretch reads LLAFSAYFFIGVAMVIIFLFI. The Cytoplasmic portion of the chain corresponds to 28–46; the sequence is YSKITPHNEWQLIKNNNTA. A helical membrane pass occupies residues 47–67; the sequence is ASLAFSGTLLGYVIPLSSAAI. Over 68-71 the chain is Periplasmic; it reads NAVS. A helical transmembrane segment spans residues 72 to 92; that stretch reads IPDYFAWGGIALVIQLLVFAG. The Cytoplasmic portion of the chain corresponds to 93 to 109; that stretch reads VRLYMPALSEKIINHNT. A helical membrane pass occupies residues 110–130; the sequence is AAGMFMGTAALAGGIFNAACM. Topologically, residues 131 to 132 are periplasmic; the sequence is TW.

This sequence belongs to the UPF0719 family.

The protein resides in the cell inner membrane. The chain is UPF0719 inner membrane protein YjfL (yjfL) from Escherichia coli O157:H7.